A 308-amino-acid chain; its full sequence is 4-hydroxy-3-methylbut-2-enyl diphosphate reductase 2 (308 aa).

A [4Fe-4S] cluster-binding site is contributed by cysteine 12. (2E)-4-hydroxy-3-methylbut-2-enyl diphosphate is bound by residues histidine 41 and histidine 74. Residues histidine 41 and histidine 74 each coordinate dimethylallyl diphosphate. Residues histidine 41 and histidine 74 each coordinate isopentenyl diphosphate. Cysteine 96 is a binding site for [4Fe-4S] cluster. Histidine 124 is a binding site for (2E)-4-hydroxy-3-methylbut-2-enyl diphosphate. Histidine 124 provides a ligand contact to dimethylallyl diphosphate. Histidine 124 serves as a coordination point for isopentenyl diphosphate. The Proton donor role is filled by glutamate 126. Threonine 164 lines the (2E)-4-hydroxy-3-methylbut-2-enyl diphosphate pocket. Residue cysteine 194 coordinates [4Fe-4S] cluster. (2E)-4-hydroxy-3-methylbut-2-enyl diphosphate-binding residues include serine 222, serine 223, asparagine 224, and serine 266. Residues serine 222, serine 223, asparagine 224, and serine 266 each coordinate dimethylallyl diphosphate. Positions 222, 223, 224, and 266 each coordinate isopentenyl diphosphate.

Belongs to the IspH family. It depends on [4Fe-4S] cluster as a cofactor.

It catalyses the reaction isopentenyl diphosphate + 2 oxidized [2Fe-2S]-[ferredoxin] + H2O = (2E)-4-hydroxy-3-methylbut-2-enyl diphosphate + 2 reduced [2Fe-2S]-[ferredoxin] + 2 H(+). The catalysed reaction is dimethylallyl diphosphate + 2 oxidized [2Fe-2S]-[ferredoxin] + H2O = (2E)-4-hydroxy-3-methylbut-2-enyl diphosphate + 2 reduced [2Fe-2S]-[ferredoxin] + 2 H(+). It participates in isoprenoid biosynthesis; dimethylallyl diphosphate biosynthesis; dimethylallyl diphosphate from (2E)-4-hydroxy-3-methylbutenyl diphosphate: step 1/1. It functions in the pathway isoprenoid biosynthesis; isopentenyl diphosphate biosynthesis via DXP pathway; isopentenyl diphosphate from 1-deoxy-D-xylulose 5-phosphate: step 6/6. In terms of biological role, catalyzes the conversion of 1-hydroxy-2-methyl-2-(E)-butenyl 4-diphosphate (HMBPP) into a mixture of isopentenyl diphosphate (IPP) and dimethylallyl diphosphate (DMAPP). Acts in the terminal step of the DOXP/MEP pathway for isoprenoid precursor biosynthesis. This is 4-hydroxy-3-methylbut-2-enyl diphosphate reductase 2 from Bradyrhizobium diazoefficiens (strain JCM 10833 / BCRC 13528 / IAM 13628 / NBRC 14792 / USDA 110).